The sequence spans 70 residues: Large ribosomal subunit protein bL31 (70 aa).

Zn(2+) contacts are provided by cysteine 16, cysteine 18, cysteine 37, and cysteine 40.

The protein belongs to the bacterial ribosomal protein bL31 family. Type A subfamily. As to quaternary structure, part of the 50S ribosomal subunit. Zn(2+) is required as a cofactor.

Binds the 23S rRNA. This Glaesserella parasuis serovar 5 (strain SH0165) (Haemophilus parasuis) protein is Large ribosomal subunit protein bL31.